A 153-amino-acid polypeptide reads, in one-letter code: Large ribosomal subunit protein uL15 (153 aa).

Residues 1–49 form a disordered region; it reads MQLHNLYPFPEERKTRRRVGRGSGSGLGCTAGKGHKGQNARAGGGVAPG. Over residues 21–31 the composition is skewed to gly residues; sequence RGSGSGLGCTA.

The protein belongs to the universal ribosomal protein uL15 family. Part of the 50S ribosomal subunit.

Functionally, binds to the 23S rRNA. This chain is Large ribosomal subunit protein uL15, found in Desulfovibrio desulfuricans (strain ATCC 27774 / DSM 6949 / MB).